A 436-amino-acid chain; its full sequence is GTPase Der (436 aa).

2 consecutive EngA-type G domains span residues 4–167 and 175–351; these read PTVA…PVEE and IRFS…ESQN. GTP contacts are provided by residues 10–17, 57–61, 119–122, 181–188, 229–233, and 294–297; these read GRPNVGKS, DTGGI, NKVD, DTAGM, and NKWD. In terms of domain architecture, KH-like spans 352–436; the sequence is KRIPSAVLND…PIHLIARKRK (85 aa).

The protein belongs to the TRAFAC class TrmE-Era-EngA-EngB-Septin-like GTPase superfamily. EngA (Der) GTPase family. Associates with the 50S ribosomal subunit.

Its function is as follows. GTPase that plays an essential role in the late steps of ribosome biogenesis. The sequence is that of GTPase Der from Streptococcus pyogenes serotype M2 (strain MGAS10270).